The following is a 105-amino-acid chain: MKTLVIACVALVLVVVHGEVIEEVNEKQLQESVEEKYSLLQRLEKLDEAITAEENRNSRVRRCGSKRAWCKEKKDCCCGYNCVYAWYNQQSSCERKWKYLFTGEC.

The first 18 residues, 1-18 (MKTLVIACVALVLVVVHG), serve as a signal peptide directing secretion. A propeptide spanning residues 19–60 (EVIEEVNEKQLQESVEEKYSLLQRLEKLDEAITAEENRNSRV) is cleaved from the precursor. 4 disulfide bridges follow: C63–C77, C70–C82, C76–C93, and C78–C105.

It belongs to the neurotoxin 06 (delta-actx) family. As to expression, expressed by the venom gland.

Its subcellular location is the secreted. Selectively slows channel inactivation of mammalian Nav1.1/SCN1A, Nav1.3/SCN3A, and Nav1.6/SCN8A and shows higher affinity for insect Nav1/para channels (site 3). Induces tonic repetitive firing of nerve impulses in insect neurons accompanied by plateau potentials. This Macrothele gigas (Japanese funnel web spider) protein is Delta-hexatoxin-Mg1a.